The following is a 76-amino-acid chain: Attractin (76 aa).

Residues 1–18 form the signal peptide; sequence MKVAIIILSLALVAAVFA. 3 cysteine pairs are disulfide-bonded: Cys-22-Cys-59, Cys-31-Cys-51, and Cys-38-Cys-44. Asn-26 is a glycosylation site (N-linked (GlcNAc...) asparagine).

Binds to temptin and enticin. In terms of tissue distribution, produced by the albumen gland of the egg cordons.

Its subcellular location is the secreted. In terms of biological role, water-borne pheromone that attract the marine mollusk Aplysia into breeding aggregations and coordinate male and female reproductive behavior within the aggregation. The polypeptide is Attractin (ATT) (Aplysia californica (California sea hare)).